The sequence spans 141 residues: Small ribosomal subunit protein bS6 (141 aa).

Residues 96–141 are disordered; sequence VTGPSAMMKTVEREEFRKASQAGNQTTAPAASPADHAAAPASADRS. A compositionally biased stretch (low complexity) spans 123 to 141; the sequence is APAASPADHAAAPASADRS.

The protein belongs to the bacterial ribosomal protein bS6 family.

Binds together with bS18 to 16S ribosomal RNA. The sequence is that of Small ribosomal subunit protein bS6 from Verminephrobacter eiseniae (strain EF01-2).